Consider the following 120-residue polypeptide: MMEGLSPASSLPLLLLLLSPAPEAALPLPSSTSCCTQLYRQPLPSRLLRRIVHMELQEADGDCHLQAVVLHLARRSVCVHPQNRSLARWLERQGKRLQGTVPSLNLVLQKKMYSHPQQQN.

The signal sequence occupies residues 1-25 (MMEGLSPASSLPLLLLLLSPAPEAA). Cystine bridges form between Cys34/Cys63 and Cys35/Cys78.

It belongs to the intercrine beta (chemokine CC) family. In terms of assembly, monomer, dimer, and tetramer. Heparin avidly promotes oligomerization. Interacts with TNFAIP6 (via Link domain). In terms of tissue distribution, isoform 1 is predominantly expressed in placenta and weakly in skin. Isoform 2 is predominantly expressed in testes and brain, weakly in kidney and liver and even lower in heart and muscle. Low expression of both isoforms in other tissues.

Its subcellular location is the secreted. It localises to the nucleus. Chemotactic factor that attracts skin-associated memory T-lymphocytes. May play a role in mediating homing of lymphocytes to cutaneous sites. May play a role in cell migration during embryogenesis. Nuclear forms may facilitate cellular migration by inducing cytoskeletal relaxation. Binds to CCR10. The chain is C-C motif chemokine 27 (Ccl27) from Mus musculus (Mouse).